The sequence spans 224 residues: Ribonuclease T (224 aa).

Positions 20 to 194 (VVIDVETAGF…YDTERTAELF (175 aa)) constitute an Exonuclease domain. The Mg(2+) site is built by Asp23, Glu25, His181, and Asp186. His181 acts as the Proton donor/acceptor in catalysis.

This sequence belongs to the RNase T family. As to quaternary structure, homodimer. Mg(2+) serves as cofactor.

Its function is as follows. Trims short 3' overhangs of a variety of RNA species, leaving a one or two nucleotide 3' overhang. Responsible for the end-turnover of tRNA: specifically removes the terminal AMP residue from uncharged tRNA (tRNA-C-C-A). Also appears to be involved in tRNA biosynthesis. The polypeptide is Ribonuclease T (Enterobacter sp. (strain 638)).